We begin with the raw amino-acid sequence, 197 residues long: Endoribonuclease YbeY (197 aa).

Residues His156, His160, and His166 each contribute to the Zn(2+) site.

Belongs to the endoribonuclease YbeY family. It depends on Zn(2+) as a cofactor.

It is found in the cytoplasm. In terms of biological role, single strand-specific metallo-endoribonuclease involved in late-stage 70S ribosome quality control and in maturation of the 3' terminus of the 16S rRNA. This is Endoribonuclease YbeY from Cupriavidus metallidurans (strain ATCC 43123 / DSM 2839 / NBRC 102507 / CH34) (Ralstonia metallidurans).